Here is a 206-residue protein sequence, read N- to C-terminus: Small ribosomal subunit protein uS4 (206 aa).

An S4 RNA-binding domain is found at 96–158; that stretch reads GRLDNVVYRM…AKQQSRIKAA (63 aa).

Belongs to the universal ribosomal protein uS4 family. As to quaternary structure, part of the 30S ribosomal subunit. Contacts protein S5. The interaction surface between S4 and S5 is involved in control of translational fidelity.

In terms of biological role, one of the primary rRNA binding proteins, it binds directly to 16S rRNA where it nucleates assembly of the body of the 30S subunit. With S5 and S12 plays an important role in translational accuracy. The sequence is that of Small ribosomal subunit protein uS4 from Aliivibrio fischeri (strain ATCC 700601 / ES114) (Vibrio fischeri).